Reading from the N-terminus, the 152-residue chain is Calmodulin-like protein 2 (152 aa).

EF-hand domains lie at 1 to 36, 37 to 72, 74 to 109, and 112 to 147; these read MDRG…VGIM, VPEN…MVEE, EEEE…MGLK, and RTLE…GGFA. Ca(2+) contacts are provided by D14, N16, D18, K20, E25, D50, N52, D54, E61, D87, N89, D91, E98, D125, D127, D129, M131, and E136.

The protein belongs to the calmodulin family.

Its function is as follows. Potential calcium sensor that is required for pollen tube attraction for ovule fertilization. The chain is Calmodulin-like protein 2 (CML2) from Arabidopsis thaliana (Mouse-ear cress).